The sequence spans 412 residues: Putative competence-damage inducible protein (412 aa).

It belongs to the CinA family.

The polypeptide is Putative competence-damage inducible protein (Bacillus thuringiensis (strain Al Hakam)).